The primary structure comprises 135 residues: Transcriptional activator protein (135 aa).

The Nuclear localization signal motif lies at 17–32 (KVTHRQVKKRAIRRRR). The segment at 37–54 (CGCSYYLHINCFNHGFTH) is a zinc-finger region. A compositionally biased stretch (polar residues) spans 77–88 (VFHNHQAPTTTI). The disordered stretch occupies residues 77 to 117 (VFHNHQAPTTTIPAEPGHHNSPGSIQSQPEEGAGDSQMFSQ). Positions 120-135 (DLDNLTASDWSFLKGL) are transactivation.

This sequence belongs to the geminiviridae transcriptional activator protein family. As to quaternary structure, monomer. Homodimer. Homooligomer. Self-interaction correlates with nuclear localization and efficient activation of transcription. Monomers suppress local silencing by interacting with and inactivating host adenosine kinase 2 (ADK2) in the cytoplasm. Interacts with and inhibits host SNF1 kinase. Binds to ssDNA. Phosphorylated.

Its subcellular location is the host nucleus. It localises to the host cytoplasm. In terms of biological role, strong activator of the late viral genes promoters. Enhances the expression of the capsid protein and nuclear shuttle protein. Acts as a suppressor of RNA-mediated gene silencing, also known as post-transcriptional gene silencing (PTGS), a mechanism of plant viral defense that limits the accumulation of viral RNAs. Suppresses the host RNA silencing by inhibiting adenosine kinase 2 (ADK2), a kinase involved in a general methylation pathway. Also suppresses the host basal defense by interacting with and inhibiting SNF1 kinase, a key regulator of cell metabolism implicated in innate antiviral defense. Determines pathogenicity. The sequence is that of Transcriptional activator protein from Hewittia sublobata (Coralbush).